We begin with the raw amino-acid sequence, 620 residues long: Endoglucanase 21 (620 aa).

The tract at residues Met1–Pro39 is disordered. The Cytoplasmic portion of the chain corresponds to Met1–Lys70. Residues Asp21 to Pro39 are compositionally biased toward basic and acidic residues. A helical; Signal-anchor for type II membrane protein membrane pass occupies residues Ile71–Leu91. The Extracellular segment spans residues Ile92 to Pro620. N-linked (GlcNAc...) asparagine glycans are attached at residues Asn108 and Asn134. Asp166 (nucleophile) is an active-site residue. Asn217, Asn325, Asn346, Asn409, Asn426, and Asn482 each carry an N-linked (GlcNAc...) asparagine glycan. Active-site residues include His514 and Asp561. Asn567 carries an N-linked (GlcNAc...) asparagine glycan. The active site involves Glu570.

The protein belongs to the glycosyl hydrolase 9 (cellulase E) family. In terms of tissue distribution, expressed in conductive tissues of young roots, cotyledons, rosette leaves, cauline leaves and sepals. Expressed in the leaf trichome support cells.

The protein resides in the cell membrane. The enzyme catalyses Endohydrolysis of (1-&gt;4)-beta-D-glucosidic linkages in cellulose, lichenin and cereal beta-D-glucans.. The polypeptide is Endoglucanase 21 (KOR3) (Arabidopsis thaliana (Mouse-ear cress)).